A 249-amino-acid polypeptide reads, in one-letter code: 5'-nucleotidase SurE (249 aa).

Residues aspartate 9, aspartate 10, serine 40, and asparagine 92 each contribute to the a divalent metal cation site.

Belongs to the SurE nucleotidase family. Requires a divalent metal cation as cofactor.

The protein resides in the cytoplasm. It catalyses the reaction a ribonucleoside 5'-phosphate + H2O = a ribonucleoside + phosphate. Nucleotidase that shows phosphatase activity on nucleoside 5'-monophosphates. This Shewanella sp. (strain ANA-3) protein is 5'-nucleotidase SurE.